The sequence spans 259 residues: Type III pantothenate kinase (259 aa).

Residue 6-13 (DVGNTNCT) coordinates ATP. 107-110 (GSDR) contributes to the substrate binding site. The Proton acceptor role is filled by aspartate 109. K(+) is bound at residue aspartate 129. Position 132 (threonine 132) interacts with ATP. Threonine 184 lines the substrate pocket.

This sequence belongs to the type III pantothenate kinase family. In terms of assembly, homodimer. Requires NH4(+) as cofactor. K(+) is required as a cofactor.

The protein localises to the cytoplasm. The enzyme catalyses (R)-pantothenate + ATP = (R)-4'-phosphopantothenate + ADP + H(+). The protein operates within cofactor biosynthesis; coenzyme A biosynthesis; CoA from (R)-pantothenate: step 1/5. Functionally, catalyzes the phosphorylation of pantothenate (Pan), the first step in CoA biosynthesis. The chain is Type III pantothenate kinase from Listeria monocytogenes serovar 1/2a (strain ATCC BAA-679 / EGD-e).